A 123-amino-acid chain; its full sequence is Small ribosomal subunit protein uS12cz/uS12cy (123 aa).

It belongs to the universal ribosomal protein uS12 family. In terms of assembly, part of the 30S ribosomal subunit.

The protein localises to the plastid. Its subcellular location is the chloroplast. Its function is as follows. With S4 and S5 plays an important role in translational accuracy. Located at the interface of the 30S and 50S subunits. The sequence is that of Small ribosomal subunit protein uS12cz/uS12cy (rps12-A) from Daucus carota (Wild carrot).